The chain runs to 241 residues: MPIFKCPQKSEPLWKEWDQKAQKNGLRHQVFAVNGDHYVGEWKDNVKHGKGTQVWKKNGAIYEGDWKSGKRDGYGTLSLPDQETGKYKRAYSGWWKGDKKCGYGIQFFGPKEYYEGDWCGNQRSGWGRMYYSNGDIYEGQWRNDKPEGEGMLRLKNGNRYEGNWQRGVKNGSGRFFHLDHGQLFEGFWVDDVAKCGTMIDFGRDEAPQPTQFPIPEVKILDPDGVLEEALAMFKKTKEEGD.

An interaction with MDM2 region spans residues 6–35; the sequence is CPQKSEPLWKEWDQKAQKNGLRHQVFAVNG. 7 MORN repeats span residues 38-60, 62-84, 91-113, 114-136, 137-159, 160-182, and 184-205; these read YVGEWKDNVKHGKGTQVWKKNGA, YEGDWKSGKRDGYGTLSLPDQET, YSGWWKGDKKCGYGIQFFGPKEY, YEGDWCGNQRSGWGRMYYSNGDI, YEGQWRNDKPEGEGMLRLKNGNR, YEGNWQRGVKNGSGRFFHLDHGQ, and FEGFWVDDVAKCGTMIDFGRDE. Positions 76–100 are interaction with SIRT1; it reads TLSLPDQETGKYKRAYSGWWKGDKK. The interval 206-240 is interaction with TP53; sequence APQPTQFPIPEVKILDPDGVLEEALAMFKKTKEEG.

In terms of assembly, interacts with MEIG1. Interacts with TP53, MDM2 and SIRT1; the interactions mediate post-transcriptional modifications of TP53 by MDM2 and SIRT1.

It localises to the cytoplasmic vesicle. Its subcellular location is the secretory vesicle. It is found in the acrosome. Its function is as follows. Assembles a suppression complex (suppresome) by tethering SIRT1 and MDM2 to regulate composite modifications of p53/TP53. Confers both deacetylation-mediated functional inactivation, by SIRT1, and ubiquitination-dependent degradation, by MDM2, of p53/TP53, promoting a proliferative and cell survival behaviors. May play a role in the regulation of spermatogenesis. The chain is MORN repeat-containing protein 3 (MORN3) from Bos taurus (Bovine).